We begin with the raw amino-acid sequence, 248 residues long: Anamorsin homolog (248 aa).

The interval 4-129 is N-terminal SAM-like domain; it reads FKGLQKSLYI…ETGSSARLSF (126 aa). Residues 130–161 are linker; sequence AKKNASAINVWKISGDDEELIDEEELLDEEDK. [2Fe-2S] cluster contacts are provided by C172, C181, C184, and C186. A fe-S binding site A region spans residues 172-186; it reads CSTTGKRKACKNCSC. C209, C212, C220, and C223 together coordinate [4Fe-4S] cluster. 2 short sequence motifs (cx2C motif) span residues 209 to 212 and 220 to 223; these read CGNC and CSTC. Positions 209–223 are fe-S binding site B; that stretch reads CGNCYLGDAFRCSTC.

This sequence belongs to the anamorsin family. In terms of assembly, monomer. The cofactor is [2Fe-2S] cluster. Requires [4Fe-4S] cluster as cofactor.

Its subcellular location is the cytoplasm. It localises to the mitochondrion intermembrane space. Functionally, component of the cytosolic iron-sulfur (Fe-S) protein assembly (CIA) machinery. Required for the maturation of extramitochondrial Fe-S proteins. Part of an electron transfer chain functioning in an early step of cytosolic Fe-S biogenesis, facilitating the de novo assembly of a [4Fe-4S] cluster on the cytosolic Fe-S scaffold complex. Electrons are transferred from NADPH via a FAD- and FMN-containing diflavin oxidoreductase. Together with the diflavin oxidoreductase, also required for the assembly of the diferric tyrosyl radical cofactor of ribonucleotide reductase (RNR), probably by providing electrons for reduction during radical cofactor maturation in the catalytic small subunit. The protein is Anamorsin homolog of Drosophila erecta (Fruit fly).